A 387-amino-acid chain; its full sequence is Alanine racemase (387 aa).

The active-site Proton acceptor; specific for D-alanine is the K38. K38 is subject to N6-(pyridoxal phosphate)lysine. A substrate-binding site is contributed by R136. The active-site Proton acceptor; specific for L-alanine is the Y267. M315 is a binding site for substrate.

Belongs to the alanine racemase family. Requires pyridoxal 5'-phosphate as cofactor.

It carries out the reaction L-alanine = D-alanine. The protein operates within amino-acid biosynthesis; D-alanine biosynthesis; D-alanine from L-alanine: step 1/1. Catalyzes the interconversion of L-alanine and D-alanine. May also act on other amino acids. The protein is Alanine racemase (alr) of Clostridium novyi (strain NT).